Reading from the N-terminus, the 393-residue chain is Acetylornithine aminotransferase (393 aa).

Pyridoxal 5'-phosphate-binding positions include 95–96 (GA) and F127. R130 lines the N(2)-acetyl-L-ornithine pocket. A pyridoxal 5'-phosphate-binding site is contributed by 214 to 217 (DEVQ). K243 is subject to N6-(pyridoxal phosphate)lysine. Position 271 (S271) interacts with N(2)-acetyl-L-ornithine. Position 272 (T272) interacts with pyridoxal 5'-phosphate.

This sequence belongs to the class-III pyridoxal-phosphate-dependent aminotransferase family. ArgD subfamily. Homodimer. Requires pyridoxal 5'-phosphate as cofactor.

The protein resides in the cytoplasm. It catalyses the reaction N(2)-acetyl-L-ornithine + 2-oxoglutarate = N-acetyl-L-glutamate 5-semialdehyde + L-glutamate. It functions in the pathway amino-acid biosynthesis; L-arginine biosynthesis; N(2)-acetyl-L-ornithine from L-glutamate: step 4/4. The chain is Acetylornithine aminotransferase from Nitrosomonas europaea (strain ATCC 19718 / CIP 103999 / KCTC 2705 / NBRC 14298).